The primary structure comprises 51 residues: Probable antitoxin PhoAT (51 aa).

The protein belongs to the PhoAT antitoxin family. Interacts with toxin PhoH2.

Its function is as follows. Antitoxin component of a type II toxin-antitoxin (TA) system. The cognate antitoxin is PhoAT; the toxin gene cannot be expressed in the absence of the antitoxin gene in M.smegmatis (strain mc(2)4517), and abrogates the toxic effects of PhoH2 in M.smegmatis strain mc(2)155. The chain is Probable antitoxin PhoAT from Mycobacterium tuberculosis (strain ATCC 25618 / H37Rv).